The chain runs to 737 residues: Acetylcholinesterase (737 aa).

An N-terminal signal peptide occupies residues 1–38 (MEIRGLLMGRLRLGRRMVPLGLLGVTALLLILPPFALV). A disordered region spans residues 141-168 (HSGATPRRRGLTRRESNSDANDNDPLVV). The N-linked (GlcNAc...) asparagine glycan is linked to Asn220. Cys228 and Cys255 are joined by a disulfide. The active-site Acyl-ester intermediate is Ser360. Cys414 and Cys427 are oxidised to a cystine. Active-site charge relay system residues include Glu486 and His600. The cysteines at positions 562 and 683 are disulfide-linked. A glycan (N-linked (GlcNAc...) asparagine) is linked at Asn670.

The protein belongs to the type-B carboxylesterase/lipase family.

The protein resides in the synapse. The enzyme catalyses acetylcholine + H2O = choline + acetate + H(+). Rapidly hydrolyzes choline released into the synapse. The polypeptide is Acetylcholinesterase (Ace) (Anopheles gambiae (African malaria mosquito)).